Here is a 164-residue protein sequence, read N- to C-terminus: UPF0114 protein YqhA (164 aa).

The next 3 helical transmembrane spans lie at Leu-15 to Phe-35, Leu-53 to Val-73, and Leu-136 to Leu-156.

This sequence belongs to the UPF0114 family.

It is found in the cell membrane. The chain is UPF0114 protein YqhA from Salmonella agona (strain SL483).